A 407-amino-acid chain; its full sequence is Fructose-1,6-bisphosphatase, chloroplastic (407 aa).

Residues 1–50 constitute a chloroplast transit peptide; sequence MAAATASSQLIFSKPYSPSRLCPFQLCVFDAKSVLSSSRRKHVNGSGVRC. Mg(2+)-binding residues include Glu126, Glu155, Asp176, Leu178, and Asp179. 179 to 182 contacts substrate; the sequence is DGSS. Residues Cys203 and Cys223 are joined by a disulfide bond. Residues Asn287, Tyr319, Tyr337, Tyr339, and Lys349 each coordinate substrate. Mg(2+) is bound at residue Glu355.

This sequence belongs to the FBPase class 1 family. In terms of assembly, homotetramer. Requires Mg(2+) as cofactor.

The protein resides in the plastid. It is found in the chloroplast stroma. The enzyme catalyses beta-D-fructose 1,6-bisphosphate + H2O = beta-D-fructose 6-phosphate + phosphate. It functions in the pathway carbohydrate biosynthesis; Calvin cycle. The sequence is that of Fructose-1,6-bisphosphatase, chloroplastic (FBP) from Pisum sativum (Garden pea).